Reading from the N-terminus, the 307-residue chain is Sporulation sigma-E factor-processing peptidase (307 aa).

5 helical membrane passes run 7 to 27 (LIWM…AVVL), 36 to 56 (LLLG…PFSH), 57 to 77 (LMVH…MTFG), 89 to 109 (LTFY…HFLF), and 127 to 147 (FGDP…SYFS). Asp-183 is an active-site residue.

The protein belongs to the peptidase U4 family. In terms of assembly, self-associates. Interacts with SigE. Interacts with SpoIIR.

Its subcellular location is the cell membrane. Functionally, probable aspartic protease that is responsible for the proteolytic cleavage of the RNA polymerase sigma E factor (SigE/spoIIGB) to yield the active peptide in the mother cell during sporulation. Responds to a signal from the forespore that is triggered by the extracellular signal protein SpoIIR. This chain is Sporulation sigma-E factor-processing peptidase, found in Priestia megaterium (strain ATCC 12872 / QMB1551) (Bacillus megaterium).